The primary structure comprises 72 residues: Large ribosomal subunit protein bL31 (72 aa).

Zn(2+) is bound by residues cysteine 16, cysteine 18, cysteine 38, and cysteine 41.

The protein belongs to the bacterial ribosomal protein bL31 family. Type A subfamily. As to quaternary structure, part of the 50S ribosomal subunit. The cofactor is Zn(2+).

Binds the 23S rRNA. The protein is Large ribosomal subunit protein bL31 of Vibrio atlanticus (strain LGP32) (Vibrio splendidus (strain Mel32)).